Reading from the N-terminus, the 231-residue chain is Ribose-5-phosphate isomerase A (231 aa).

Residues 32–35 (TGST), 85–88 (DGAD), and 98–101 (KGGG) each bind substrate. The active-site Proton acceptor is the Glu107. Position 125 (Lys125) interacts with substrate.

This sequence belongs to the ribose 5-phosphate isomerase family. As to quaternary structure, homodimer.

The enzyme catalyses aldehydo-D-ribose 5-phosphate = D-ribulose 5-phosphate. The protein operates within carbohydrate degradation; pentose phosphate pathway; D-ribose 5-phosphate from D-ribulose 5-phosphate (non-oxidative stage): step 1/1. Catalyzes the reversible conversion of ribose-5-phosphate to ribulose 5-phosphate. The polypeptide is Ribose-5-phosphate isomerase A (Burkholderia cenocepacia (strain ATCC BAA-245 / DSM 16553 / LMG 16656 / NCTC 13227 / J2315 / CF5610) (Burkholderia cepacia (strain J2315))).